The chain runs to 122 residues: Small ribosomal subunit protein bS6 (122 aa).

It belongs to the bacterial ribosomal protein bS6 family.

Binds together with bS18 to 16S ribosomal RNA. This is Small ribosomal subunit protein bS6 from Neisseria gonorrhoeae (strain ATCC 700825 / FA 1090).